Reading from the N-terminus, the 187-residue chain is UPF0301 protein VP2612 (187 aa).

The protein belongs to the UPF0301 (AlgH) family.

The sequence is that of UPF0301 protein VP2612 from Vibrio parahaemolyticus serotype O3:K6 (strain RIMD 2210633).